Consider the following 130-residue polypeptide: Small ribosomal subunit protein uS8 (130 aa).

The protein belongs to the universal ribosomal protein uS8 family. Part of the 30S ribosomal subunit. Contacts proteins S5 and S12.

One of the primary rRNA binding proteins, it binds directly to 16S rRNA central domain where it helps coordinate assembly of the platform of the 30S subunit. In Shewanella piezotolerans (strain WP3 / JCM 13877), this protein is Small ribosomal subunit protein uS8.